The primary structure comprises 287 residues: Sulfofructosephosphate aldolase (287 aa).

Catalysis depends on D82, which acts as the Proton donor. H83 and H180 together coordinate Zn(2+). G181 contributes to the dihydroxyacetone phosphate binding site. A Zn(2+)-binding site is contributed by H208. Dihydroxyacetone phosphate-binding positions include 209 to 211 and 230 to 233; these read GGS and NVDT.

It belongs to the class II fructose-bisphosphate aldolase family. The cofactor is Zn(2+).

The enzyme catalyses 6-deoxy-6-sulfo-D-fructose 1-phosphate = (2S)-3-sulfolactaldehyde + dihydroxyacetone phosphate. Functionally, part of the sulfo-EMP2 pathway, a D-sulfoquinovose degradation pathway that produces sulfolactate (SL). Cleaves 6-deoxy-6-sulfo-D-fructose 1-phosphate (SFP) to form dihydroxyacetone phosphate (DHAP) and 3-sulfolactaldehyde (SLA). This Alkalicoccus urumqiensis (Bacillus urumqiensis) protein is Sulfofructosephosphate aldolase.